Here is a 181-residue protein sequence, read N- to C-terminus: Adenylate kinase (181 aa).

An ATP-binding site is contributed by 10-15; the sequence is GAGKGT. Positions 30–59 are NMP; the sequence is STGELFRRNIEKDTKLGHEAKKYLDAGDLV. Residues Thr31, Arg36, 57–59, 85–88, and Gln92 each bind AMP; these read DLV and GYPR. An LID region spans residues 126–132; that stretch reads GRGRADD. Arg127 is an ATP binding site. Residues Arg129 and Arg140 each contribute to the AMP site. Gly166 provides a ligand contact to ATP.

It belongs to the adenylate kinase family. Monomer.

The protein localises to the cytoplasm. It carries out the reaction AMP + ATP = 2 ADP. It functions in the pathway purine metabolism; AMP biosynthesis via salvage pathway; AMP from ADP: step 1/1. Functionally, catalyzes the reversible transfer of the terminal phosphate group between ATP and AMP. Plays an important role in cellular energy homeostasis and in adenine nucleotide metabolism. The polypeptide is Adenylate kinase (Mycobacterium leprae (strain Br4923)).